Consider the following 550-residue polypeptide: Hydroxylamine reductase (550 aa).

Cys-5, Cys-8, Cys-17, and Cys-23 together coordinate [4Fe-4S] cluster. Hybrid [4Fe-2O-2S] cluster contacts are provided by His-250, Glu-274, Cys-319, Cys-405, Cys-433, Cys-458, Glu-492, and Lys-494. Cysteine persulfide is present on Cys-405.

It belongs to the HCP family. [4Fe-4S] cluster serves as cofactor. The cofactor is hybrid [4Fe-2O-2S] cluster.

The protein resides in the cytoplasm. The catalysed reaction is A + NH4(+) + H2O = hydroxylamine + AH2 + H(+). Catalyzes the reduction of hydroxylamine to form NH(3) and H(2)O. The sequence is that of Hydroxylamine reductase from Geobacter sulfurreducens (strain ATCC 51573 / DSM 12127 / PCA).